The primary structure comprises 1325 residues: MKKRVVKLRELVPAVAALAVAVLIQSATGSSGGSGHTPTTQATHADDHDLTTHNGTEEHDDGHDDGHDDLHAHAPKVIVFISGSCLFGAISRSLFKKLPIPYTVVLLILGAILGVVASNVPLVEEHTRDVAHMDPHVLLQIFLPVLIFESAFAMDVHTFMRSFSQVCILALFGLVVASVLTAVLAMNLFNYNWNFSEAMMFGAIMSATDPVAVVALLKDLGASKQLGTIIEGESLLNDGCAIVIFNVFMKMVFFPQLTSTVGQNVLYFLQVAVAGPLWGYAVAKVTVFFLSHIFNDALVEITITLAATYLTYYIGDIWLEVSGVLAVVVLGLIVNAEKTSISPEVEVFLHRFWEMLAYLANTLIFMMVGVVVTQKALVAVDKMDWFYLIILYLAITIIRGMVISLFSPILSRIGYGLTWRNAVIMTWGGLRGAVGLALALVVENLAGNDVIGSKFLFHTAGIVVLTLVINATTIQTLLRILGMSDISIPKRLAMAGAVRRIHEGQNRTLNMLKSDRFLADADWDIATAACEISDPYSALSDDENAPADELTLGERKSVCPGCKAMVPNEPSPREFADMMEEARLRMLKAEKISYWKQFEHGMLAREALRLLVQHAEVAADEKDQFILVDDLKKSWQIKGIYPWLKRKLEDLISEKKIAAIPMPKYKLGKLMYKICHHMAFEVTINIAIVLNIVPIIMEFVVQDKMASVSTMAAPGSTVSSEPSSLQKIEDALRISNYVFFVIYAIEAIVKILGLGRHYIVSHWNKFDAFILVVALVDIIIAETLLKGSITINLSSIKVVKLFRLLRGLRMLRLTKALIPKLILVVNGKINNQLSLGYDVGKGYIIGEEEVGKIIDRMVDNKKILRELKHISETGRLQVVKELGLLQREHPGIAVSVKTRQAIRTILNHSRETIHELQGAGLLDEMEAHKLELTVEIKMKRLMNAPSSIPPPPPENLLKNVSWLAGDMKLIDFIKARASLLHFDYGEVIVREGDESDGLFLIVSGLVKLYGKSAFLDHDNPPVTAGSEENEVFEDYLTVGNVIGEMGVLTKKPRNATVTCETTVQVYFITAEDMNIAIDTFTLYPSLEYRLWRVVAIRIATPLIMEQMAFQGWTQEKVKLHLERGYLVDLAESHFQFNIDATLEDVILINGTAYNAHTREEIRSPCLISRTVHKLTFQYTATEEPRLFVVRNAEYNGPILDGRLDVDSKRSLISITEISSNMCLKHAAELRQKNSKVMLSRKSSGAAAKEEEDCIPNTSDVEQAAGVSPSVPTKTTPKPKSFLPSLGLSMSKERVNGEAVEESPVKTKQGEETPETEEGAAPRVNV.

Positions Met-1–Gly-29 are cleaved as a signal peptide. Positions Thr-28–Asp-68 are disordered. The Extracellular segment spans residues Ser-30–Lys-76. A compositionally biased stretch (basic and acidic residues) spans His-44–Asp-68. An a 1,2-diacylglycero-3-phosphate-binding site is contributed by His-73. Residues Val-77–Lys-96 form a helical membrane-spanning segment. The Cytoplasmic segment spans residues Lys-97 to Pro-101. Residues Tyr-102–Asn-119 traverse the membrane as a helical segment. Residues Val-120–Pro-135 lie on the Extracellular side of the membrane. A helical membrane pass occupies residues His-136 to Phe-152. At Ala-153–Ser-162 the chain is on the cytoplasmic side. The helical transmembrane segment at Phe-163–Leu-188 threads the bilayer. Residues Phe-163–Lys-250 form a transport core domain region. Topologically, residues Phe-189–Asn-194 are extracellular. A helical transmembrane segment spans residues Phe-195 to Leu-220. The Cytoplasmic portion of the chain corresponds to Gly-221–Ser-223. The chain crosses the membrane as a helical span at residues Lys-224 to Met-249. The Essential for sodium:proton exchange signature appears at Asn-237–Asp-238. Topologically, residues Lys-250–Thr-260 are extracellular. A helical membrane pass occupies residues Val-261–His-292. At Ile-293–Asp-296 the chain is on the cytoplasmic side. The helical transmembrane segment at Ala-297–Leu-319 threads the bilayer. Residues Glu-320–Ser-322 lie on the Extracellular side of the membrane. The helical transmembrane segment at Gly-323–Ala-336 threads the bilayer. The Cytoplasmic portion of the chain corresponds to Glu-337 to Pro-343. A helical membrane pass occupies residues Glu-344–Leu-377. Residues Val-378–Lys-382 lie on the Extracellular side of the membrane. A helical transmembrane segment spans residues Met-383–Arg-412. Positions Met-383–Leu-481 are transport core domain. Residues Ile-413 to Thr-418 lie on the Cytoplasmic side of the membrane. Residues Trp-419–Ala-446 traverse the membrane as a helical segment. Topologically, residues Gly-447–Val-450 are extracellular. The helical transmembrane segment at Ile-451–Leu-481 threads the bilayer. Over Gly-482–His-677 the chain is Cytoplasmic. The segment at Phe-575 to Asp-620 is interacts with the S4 segment of voltage sensor domain. Residues Arg-605–Asp-620 form an interacts with the transport core domain; can lock the transporter in the inward conformation region. Residues Met-678–Val-708 form a helical membrane-spanning segment. Over Ser-709–Ser-724 the chain is Extracellular. Residues Leu-725 to Leu-752 form a helical membrane-spanning segment. At Gly-753 to Val-760 the chain is on the cytoplasmic side. Residues Ser-761–Leu-784 form a helical membrane-spanning segment. Topologically, residues Leu-785 to Ser-795 are extracellular. The chain crosses the membrane as a helical span at residues Ile-796 to Ile-822. The tract at residues Ile-796–Met-857 is S4 segment of voltage sensor domain. Topologically, residues Leu-823–Val-1325 are cytoplasmic. The interval Asn-860–Ala-919 is interacts with the S4 segment of voltage sensor domain. The cNMP-binding domain stretch occupies residues Lys-968–Ile-1068. Gly-1043 contributes to the 3',5'-cyclic AMP binding site. The 3',5'-cyclic GMP site is built by Gly-1043, Glu-1044, and Met-1045. 3',5'-cyclic AMP is bound by residues Met-1045, Gly-1046, Arg-1053, and Asn-1054. The 3',5'-cyclic GMP site is built by Arg-1053 and Asn-1054. Residues Met-1237–Val-1325 are disordered. The segment covering Val-1266 to Ser-1280 has biased composition (low complexity).

The protein belongs to the monovalent cation:proton antiporter 1 (CPA1) transporter (TC 2.A.36) family. As to quaternary structure, homodimer; the dimerization is stabilized in the presence of phosphatidic acids.

Its subcellular location is the cell projection. The protein resides in the cilium. It localises to the flagellum membrane. It catalyses the reaction Na(+)(in) + H(+)(out) = Na(+)(out) + H(+)(in). Its activity is regulated as follows. Gated by voltage and stimulated by cyclic nucleotides which shift the activation voltage closer to resting membrane potential. Not inhibited by common sodium:proton exchanger inhibitors such as amiloride. Electroneutral sodium:proton antiporter that regulates intracellular pH of sperm along with capacitation and fertility. Activated in response to egg-derived chemoattractants, couples membrane voltage to sodium:proton exchange and transduces membrane hyperpolarization to cytoplasmic alkalization to cAMP signaling and ultimately to sperm motility. This Strongylocentrotus purpuratus (Purple sea urchin) protein is Sperm-specific sodium:proton exchanger.